A 179-amino-acid polypeptide reads, in one-letter code: Large ribosomal subunit protein uL5 (179 aa).

This sequence belongs to the universal ribosomal protein uL5 family. Part of the 50S ribosomal subunit; part of the 5S rRNA/L5/L18/L25 subcomplex. Contacts the 5S rRNA and the P site tRNA. Forms a bridge to the 30S subunit in the 70S ribosome.

In terms of biological role, this is one of the proteins that bind and probably mediate the attachment of the 5S RNA into the large ribosomal subunit, where it forms part of the central protuberance. In the 70S ribosome it contacts protein S13 of the 30S subunit (bridge B1b), connecting the 2 subunits; this bridge is implicated in subunit movement. Contacts the P site tRNA; the 5S rRNA and some of its associated proteins might help stabilize positioning of ribosome-bound tRNAs. The polypeptide is Large ribosomal subunit protein uL5 (Prochlorococcus marinus (strain MIT 9301)).